A 193-amino-acid chain; its full sequence is Potassium-transporting ATPase KdpC subunit (193 aa).

A helical membrane pass occupies residues 10-30 (AAIIIFSVLTGVIYPALVTVI).

Belongs to the KdpC family. The system is composed of three essential subunits: KdpA, KdpB and KdpC.

It localises to the cell membrane. Its function is as follows. Part of the high-affinity ATP-driven potassium transport (or Kdp) system, which catalyzes the hydrolysis of ATP coupled with the electrogenic transport of potassium into the cytoplasm. This subunit acts as a catalytic chaperone that increases the ATP-binding affinity of the ATP-hydrolyzing subunit KdpB by the formation of a transient KdpB/KdpC/ATP ternary complex. The sequence is that of Potassium-transporting ATPase KdpC subunit from Herpetosiphon aurantiacus (strain ATCC 23779 / DSM 785 / 114-95).